Reading from the N-terminus, the 55-residue chain is uncharacterized protein (55 aa).

Positions 1 to 25 (MKFVKAIWPFVAVAIVFMFMSAFKF) are cleaved as a signal peptide.

This is an uncharacterized protein from Bacillus subtilis (strain 168).